Here is a 344-residue protein sequence, read N- to C-terminus: L-rhamnose-proton symporter (344 aa).

Helical transmembrane passes span 4–24, 38–58, 68–88, 101–121, 137–157, 175–195, 207–227, 259–279, 290–310, and 321–341; these read AIILGIIWHLVGAASAACFYA, WSIGGLVSWLILPWTVSYLLL, FSIATLLPVFLFGAMWGIGNI, MGIGIAIGITLIIGTLMTPIL, TLLGVFVALIGVAIVSYAGLL, LILAVMCGIFSAGMSFAMDAA, INSLYVALPSYVIIMGGGAII, ILFSALAGLMWYLQFFFYAWG, MSWMLHMSFYVLCGGIVGLLL, and VAVLCIGCLVIILAANIVGLG.

The protein belongs to the L-rhamnose transporter (TC 2.A.7.6) family.

The protein resides in the cell inner membrane. The catalysed reaction is L-rhamnopyranose(in) + H(+)(in) = L-rhamnopyranose(out) + H(+)(out). Its function is as follows. Uptake of L-rhamnose across the cytoplasmic membrane with the concomitant transport of protons into the cell (symport system). This chain is L-rhamnose-proton symporter, found in Yersinia pseudotuberculosis serotype O:1b (strain IP 31758).